The following is a 111-amino-acid chain: Probable 4-amino-4-deoxy-L-arabinose-phosphoundecaprenol flippase subunit ArnE (111 aa).

The next 3 helical transmembrane spans lie at 39 to 59, 61 to 81, and 89 to 109; these read WLAISLLLLGGAMLVWLWVLQ, VPVGIAYPMFSLNFVLVTLAA, and VSLRHGCGLLLIVAGVMCMGV. The EamA domain occupies 40-109; it reads LAISLLLLGG…IVAGVMCMGV (70 aa).

The protein belongs to the ArnE family. In terms of assembly, heterodimer of ArnE and ArnF.

Its subcellular location is the cell inner membrane. The protein operates within bacterial outer membrane biogenesis; lipopolysaccharide biosynthesis. Translocates 4-amino-4-deoxy-L-arabinose-phosphoundecaprenol (alpha-L-Ara4N-phosphoundecaprenol) from the cytoplasmic to the periplasmic side of the inner membrane. The protein is Probable 4-amino-4-deoxy-L-arabinose-phosphoundecaprenol flippase subunit ArnE of Sodalis glossinidius (strain morsitans).